Reading from the N-terminus, the 182-residue chain is Riboflavin kinase (182 aa).

The Mg(2+) site is built by Thr-39 and Asn-41. Glu-117 serves as the catalytic Nucleophile.

It belongs to the flavokinase family. It depends on Zn(2+) as a cofactor. Mg(2+) serves as cofactor.

The catalysed reaction is riboflavin + ATP = FMN + ADP + H(+). Its pathway is cofactor biosynthesis; FMN biosynthesis; FMN from riboflavin (ATP route): step 1/1. Functionally, catalyzes the phosphorylation of riboflavin (vitamin B2) to form flavin mononucleotide (FMN) coenzyme. This is Riboflavin kinase (FMN1) from Lodderomyces elongisporus (strain ATCC 11503 / CBS 2605 / JCM 1781 / NBRC 1676 / NRRL YB-4239) (Yeast).